The chain runs to 80 residues: UPF0248 protein M1425_2629 (80 aa).

Belongs to the UPF0248 family.

The protein is UPF0248 protein M1425_2629 of Saccharolobus islandicus (strain M.14.25 / Kamchatka #1) (Sulfolobus islandicus).